A 446-amino-acid chain; its full sequence is uncharacterized protein (446 aa).

3 disordered regions span residues 198–233, 309–337, and 394–431; these read SIQK…ENYS, NEDN…DDSK, and SESV…FGNT. Positions 199–224 are enriched in low complexity; that stretch reads IQKQIPKQTQEQTQKQTQEQTQESSQ. Over residues 317-333 the composition is skewed to acidic residues; that stretch reads DNEEDSDESDIESDSDL. A compositionally biased stretch (basic and acidic residues) spans 397 to 418; it reads VKSDSNESKSIKPESIKSESIK.

This is an uncharacterized protein from Acanthamoeba polyphaga mimivirus (APMV).